The primary structure comprises 220 residues: Probable pterin-4-alpha-carbinolamine dehydratase, chloroplastic (220 aa).

A chloroplast-targeting transit peptide spans 1-50 (MAATSSSPPCNISASSLLLRQPSRSILKVFGLLPPVSRNNRKLGRLTVTR).

It belongs to the pterin-4-alpha-carbinolamine dehydratase family. Interacts with SDIR1. Interacts with AIRP2. In terms of processing, ubiquitinated by SDIR1. Ubiquitination leads to its subsequent degradation, thus controlling abscisic acid (ABA) signaling. Ubiquitinated by AIRP2. Ubiquitination leads to its subsequent degradation, thus controlling abscisic acid (ABA) signaling during drought stress.

The protein localises to the plastid. It localises to the chloroplast. Its subcellular location is the cell membrane. It is found in the nucleus. It catalyses the reaction (4aS,6R)-4a-hydroxy-L-erythro-5,6,7,8-tetrahydrobiopterin = (6R)-L-erythro-6,7-dihydrobiopterin + H2O. Its function is as follows. Involved in tetrahydrobiopterin biosynthesis. Interacts with and acts downstream of the E3 ubiquitin-protein ligase SDIR1 in abscisic acid (ABA) and salt stress signaling. Regulates the expression of the bZIP transcription factor ABI5, which mediates responses to ABA during seed germination and salt stress. The SDIR1-ATP1/SDIRIP1 complex plays an important role in ABA signaling through the ubiquitination pathway. Acts downstream of AIRP2 in regulation of ABA signaling during drought stress. This is Probable pterin-4-alpha-carbinolamine dehydratase, chloroplastic from Arabidopsis thaliana (Mouse-ear cress).